We begin with the raw amino-acid sequence, 271 residues long: Chitinase 6 (271 aa).

Residues 1–20 form the signal peptide; that stretch reads MARRLSLLAVVLAMVAAVSA. In terms of domain architecture, Chitin-binding type-1 spans 25 to 60; it reads AQSCGCASDQCCSKWGFCGTGSDYCGTGCQAGPCDV. 6 disulfides stabilise this stretch: cysteine 28/cysteine 36, cysteine 30/cysteine 42, cysteine 35/cysteine 49, cysteine 88/cysteine 137, cysteine 150/cysteine 159, and cysteine 239/cysteine 271. Glutamate 132 (proton donor) is an active-site residue. The N-linked (GlcNAc...) asparagine glycan is linked to asparagine 268.

The protein belongs to the glycosyl hydrolase 19 family. Chitinase class IV subfamily. Expressed in roots, leaves, sheaths and meristems.

The catalysed reaction is Random endo-hydrolysis of N-acetyl-beta-D-glucosaminide (1-&gt;4)-beta-linkages in chitin and chitodextrins.. In terms of biological role, may function in reproductive organs during embryogenesis and seed maturation. This is Chitinase 6 (Cht6) from Oryza sativa subsp. japonica (Rice).